The sequence spans 317 residues: MPVLGSQRRLLGSLNCTPPATFPLMLAPNRTGPQCLEVSIPNGLFLSLGLVSLVENVLVVAAIAKNSNLHSPMYYFICCLAVSDLLVSVSNVLETAVMLLLEAGALAARAAVVQQLDNVIDVLICGSMVSSLCFLGAIAVDRYISIFYALRYHSVVTLPRAWRIIAAIWVASILTSLLFITYYNHTVVLLCLVGFFIAMLALMAVLYVHMLARACQHARGIARLQKRQRPIHRGFGLKGAATLTILLGVFFLCWGPFFLHLSLIVLCPQHPTCGCIFKNFNLFLALIICNAIVDPLIYAFRSQELRKTLQEVLQCSW.

The Extracellular segment spans residues 1–37 (MPVLGSQRRLLGSLNCTPPATFPLMLAPNRTGPQCLE). N-linked (GlcNAc...) asparagine glycosylation is present at asparagine 29. The chain crosses the membrane as a helical span at residues 38-63 (VSIPNGLFLSLGLVSLVENVLVVAAI). Residues 64-72 (AKNSNLHSP) are Cytoplasmic-facing. A helical membrane pass occupies residues 73 to 93 (MYYFICCLAVSDLLVSVSNVL). The Extracellular portion of the chain corresponds to 94 to 118 (ETAVMLLLEAGALAARAAVVQQLDN). The chain crosses the membrane as a helical span at residues 119–140 (VIDVLICGSMVSSLCFLGAIAV). The Cytoplasmic segment spans residues 141–163 (DRYISIFYALRYHSVVTLPRAWR). A helical transmembrane segment spans residues 164–183 (IIAAIWVASILTSLLFITYY). Residues 184-191 (NHTVVLLC) are Extracellular-facing. Residues 192–211 (LVGFFIAMLALMAVLYVHML) form a helical membrane-spanning segment. Topologically, residues 212–240 (ARACQHARGIARLQKRQRPIHRGFGLKGA) are cytoplasmic. A helical membrane pass occupies residues 241 to 266 (ATLTILLGVFFLCWGPFFLHLSLIVL). The Extracellular segment spans residues 267 to 279 (CPQHPTCGCIFKN). The chain crosses the membrane as a helical span at residues 280-300 (FNLFLALIICNAIVDPLIYAF). Residues 301–317 (RSQELRKTLQEVLQCSW) lie on the Cytoplasmic side of the membrane. The S-palmitoyl cysteine moiety is linked to residue cysteine 315.

Belongs to the G-protein coupled receptor 1 family. As to quaternary structure, interacts with MGRN1, but does not undergo MGRN1-mediated ubiquitination; this interaction competes with GNAS-binding and thus inhibits agonist-induced cAMP production. Interacts with OPN3; the interaction results in a decrease in MC1R-mediated cAMP signaling and ultimately a decrease in melanin production in melanocytes.

The protein localises to the cell membrane. Functionally, receptor for MSH (alpha, beta and gamma) and ACTH. The activity of this receptor is mediated by G proteins which activate adenylate cyclase. Mediates melanogenesis, the production of eumelanin (black/brown) and phaeomelanin (red/yellow), via regulation of cAMP signaling in melanocytes. In Rangifer tarandus (Reindeer), this protein is Melanocyte-stimulating hormone receptor (MC1R).